Reading from the N-terminus, the 159-residue chain is Cytochrome c-type biogenesis protein CcmE (159 aa).

The Cytoplasmic segment spans residues 1–8; sequence MNPRRKKR. A helical; Signal-anchor for type II membrane protein membrane pass occupies residues 9-29; that stretch reads LLVIVAVLFGIGASIGLVLYA. The Periplasmic segment spans residues 30–159; that stretch reads LQENINLFYT…KPKYNLDSGN (130 aa). 2 residues coordinate heme: H130 and Y134.

Belongs to the CcmE/CycJ family.

It is found in the cell inner membrane. Functionally, heme chaperone required for the biogenesis of c-type cytochromes. Transiently binds heme delivered by CcmC and transfers the heme to apo-cytochromes in a process facilitated by CcmF and CcmH. The protein is Cytochrome c-type biogenesis protein CcmE of Pseudoalteromonas translucida (strain TAC 125).